Here is a 160-residue protein sequence, read N- to C-terminus: SsrA-binding protein (160 aa).

Residues 136-160 form a disordered region; it reads KRHVEKERDANREVQRAMRSKGKDD.

The protein belongs to the SmpB family.

The protein localises to the cytoplasm. Functionally, required for rescue of stalled ribosomes mediated by trans-translation. Binds to transfer-messenger RNA (tmRNA), required for stable association of tmRNA with ribosomes. tmRNA and SmpB together mimic tRNA shape, replacing the anticodon stem-loop with SmpB. tmRNA is encoded by the ssrA gene; the 2 termini fold to resemble tRNA(Ala) and it encodes a 'tag peptide', a short internal open reading frame. During trans-translation Ala-aminoacylated tmRNA acts like a tRNA, entering the A-site of stalled ribosomes, displacing the stalled mRNA. The ribosome then switches to translate the ORF on the tmRNA; the nascent peptide is terminated with the 'tag peptide' encoded by the tmRNA and targeted for degradation. The ribosome is freed to recommence translation, which seems to be the essential function of trans-translation. The chain is SsrA-binding protein from Ectopseudomonas mendocina (strain ymp) (Pseudomonas mendocina).